Reading from the N-terminus, the 105-residue chain is uncharacterized protein (105 aa).

A disordered region spans residues 81-105 (NNNNKTITVDNNNNNNNNNNNNNNK).

This is an uncharacterized protein from Dictyostelium discoideum (Social amoeba).